The chain runs to 415 residues: Gamma-glutamyl phosphate reductase (415 aa).

The protein belongs to the gamma-glutamyl phosphate reductase family.

It localises to the cytoplasm. The catalysed reaction is L-glutamate 5-semialdehyde + phosphate + NADP(+) = L-glutamyl 5-phosphate + NADPH + H(+). The protein operates within amino-acid biosynthesis; L-proline biosynthesis; L-glutamate 5-semialdehyde from L-glutamate: step 2/2. Catalyzes the NADPH-dependent reduction of L-glutamate 5-phosphate into L-glutamate 5-semialdehyde and phosphate. The product spontaneously undergoes cyclization to form 1-pyrroline-5-carboxylate. In Bacillus thuringiensis subsp. konkukian (strain 97-27), this protein is Gamma-glutamyl phosphate reductase.